Consider the following 268-residue polypeptide: Shikimate dehydrogenase (NADP(+)) (268 aa).

Shikimate is bound by residues 15-17 and Thr60; that span reads SKS. Lys64 acts as the Proton acceptor in catalysis. Shikimate-binding residues include Asn85 and Asp101. NADP(+) is bound by residues 121 to 125 and Leu208; that span reads GAGGS. Tyr210 is a shikimate binding site. Gly230 serves as a coordination point for NADP(+).

The protein belongs to the shikimate dehydrogenase family. As to quaternary structure, homodimer.

It carries out the reaction shikimate + NADP(+) = 3-dehydroshikimate + NADPH + H(+). It functions in the pathway metabolic intermediate biosynthesis; chorismate biosynthesis; chorismate from D-erythrose 4-phosphate and phosphoenolpyruvate: step 4/7. Its function is as follows. Involved in the biosynthesis of the chorismate, which leads to the biosynthesis of aromatic amino acids. Catalyzes the reversible NADPH linked reduction of 3-dehydroshikimate (DHSA) to yield shikimate (SA). The chain is Shikimate dehydrogenase (NADP(+)) from Helicobacter hepaticus (strain ATCC 51449 / 3B1).